Here is a 344-residue protein sequence, read N- to C-terminus: tRNA N6-adenosine threonylcarbamoyltransferase (344 aa).

2 residues coordinate Fe cation: His-112 and His-116. Residues 134-138 (LASGG), Asp-167, Gly-180, and Asn-280 contribute to the substrate site. Asp-308 contributes to the Fe cation binding site.

This sequence belongs to the KAE1 / TsaD family. It depends on Fe(2+) as a cofactor.

The protein resides in the cytoplasm. The enzyme catalyses L-threonylcarbamoyladenylate + adenosine(37) in tRNA = N(6)-L-threonylcarbamoyladenosine(37) in tRNA + AMP + H(+). In terms of biological role, required for the formation of a threonylcarbamoyl group on adenosine at position 37 (t(6)A37) in tRNAs that read codons beginning with adenine. Is involved in the transfer of the threonylcarbamoyl moiety of threonylcarbamoyl-AMP (TC-AMP) to the N6 group of A37, together with TsaE and TsaB. TsaD likely plays a direct catalytic role in this reaction. The chain is tRNA N6-adenosine threonylcarbamoyltransferase from Rickettsia peacockii (strain Rustic).